The primary structure comprises 287 residues: uncharacterized protein (287 aa).

A signal peptide spans 1–31; the sequence is MLGSMALKLRKWIWASIPSLALILSSCSALV.

Belongs to the MG439/MG440 family.

This is an uncharacterized protein from Mycoplasma pneumoniae (strain ATCC 29342 / M129 / Subtype 1) (Mycoplasmoides pneumoniae).